Consider the following 628-residue polypeptide: Netrin-4 (628 aa).

Residues 1–18 (MGSCARLLLLWGCTVVAA) form the signal peptide. Residues 30 to 261 (CEKACNPRMG…AIYDFIVKGS (232 aa)) form the Laminin N-terminal domain. 2 N-linked (GlcNAc...) asparagine glycosylation sites follow: N56 and N163. 12 disulfides stabilise this stretch: C262–C271, C264–C293, C295–C304, C307–C329, C332–C341, C334–C359, C362–C371, C374–C392, C395–C413, C397–C420, C422–C431, and C434–C446. Laminin EGF-like domains lie at 262–331 (CFCN…ECRT), 332–394 (CKCN…ACKP), and 395–448 (CSCH…GCRP). An N-linked (GlcNAc...) asparagine glycan is attached at N353. N-linked (GlcNAc...) asparagine glycosylation is present at N483. Cystine bridges form between C506–C576 and C520–C627. Residues 506–627 (CECKEQTLGN…KVMDILKREC (122 aa)) enclose the NTR domain.

In terms of assembly, may form a homodimer. In terms of tissue distribution, expressed in kidney, spleen, mammary gland, aorta, heart, ovary, prostate and fetal spleen.

The protein localises to the secreted. Its subcellular location is the extracellular space. It is found in the extracellular matrix. It localises to the basement membrane. May play an important role in neural, kidney and vascular development. Promotes neurite elongation from olfactory bulb explants. In Homo sapiens (Human), this protein is Netrin-4 (NTN4).